The sequence spans 136 residues: Small cardioactive peptides (136 aa).

Positions 1–24 (MEITLPRVSLSLAVLLVIVCSVDA) are cleaved as a signal peptide. A methionine amide mark is found at Met-33 and Met-44. Residues 47–136 (SHFKSETSAD…FNKLKSLLEK (90 aa)) constitute a propeptide, carboxy-terminal peptide.

Belongs to the SCP family.

The protein localises to the secreted. Functionally, the cardioactive peptides enhance the contractions of the auricle in vitro. The protein is Small cardioactive peptides (SCP) of Lymnaea stagnalis (Great pond snail).